The primary structure comprises 814 residues: DNA ligase (814 aa).

NAD(+) is bound by residues 46–50 (DAEYD), 95–96 (SL), and E129. The N6-AMP-lysine intermediate role is filled by K131. Residues R152, E189, K305, and K329 each coordinate NAD(+). C434, C437, C458, and C464 together coordinate Zn(2+). A disordered region spans residues 525 to 548 (LSAQRRSEGEPAPKKPTKKKGEEE). The 80-residue stretch at 735–814 (TSAAAFAGKT…DDWLAMLAEA (80 aa)) folds into the BRCT domain.

Belongs to the NAD-dependent DNA ligase family. LigA subfamily. Mg(2+) serves as cofactor. Mn(2+) is required as a cofactor.

The catalysed reaction is NAD(+) + (deoxyribonucleotide)n-3'-hydroxyl + 5'-phospho-(deoxyribonucleotide)m = (deoxyribonucleotide)n+m + AMP + beta-nicotinamide D-nucleotide.. DNA ligase that catalyzes the formation of phosphodiester linkages between 5'-phosphoryl and 3'-hydroxyl groups in double-stranded DNA using NAD as a coenzyme and as the energy source for the reaction. It is essential for DNA replication and repair of damaged DNA. This chain is DNA ligase, found in Methylorubrum extorquens (strain PA1) (Methylobacterium extorquens).